The chain runs to 699 residues: MTVQKPIESLSPAQAKREHRRLGEQITEHDRLYYQEDAPRVSDAEYDALRRRYEALETAFPELVSAESLTKKIGAAPAEKFAKIIHKVPMLSLANIFSDEEVGEFVARVRRFLGLGADAPLAISAEPKIDGLSCSLRYEGGYLVQAATRGDGYEGEDVTANVRTIQEIPHQLQGHAPEILEVRGEVYMTHADFAALNERQEAAGKTIFANPRNSAAGSLRQLDPKVTAGRPLHFFAYAWGEASEEPADTQMGMVTAFKAFGLPVNPLMQLCHSAEDLIAHYHDIEARRALLDYDIDGVVYKVNSIALQKRLGFVSRAPRWATAHKFPAEKAVTLLRDIEIQVGRTGALTPVARLEPITVGGVVVSNATLHNEDEIARKDIRIGDMVMIQRAGDVIPQILGPILDKRPQDAQPYEFPQVCPVCGSAAIREIDPKTGTADVVRRCTGGLVCAAQVVERLKHFASRNAFDIEGLGDKQIEQFYHDGLIHTPVDIFTLQERDARSLKKLKDREGYGETSVRNLFQAIEARRHIPVNRFIYALGIRHVGETNARRAARAFGTFDALRAVASRAEEGSEERSELTNVEGFGPVVAEAIFDFFHEQHNQDVLDGLLEQVTPEPMEAVAKESPVAGKTVVFTGALEHMTREEAKAQAERLGAKVAGSVSKKTDLVVAGPGAGSKLAKAAELNIETISEEDWLKLVGE.

The disordered stretch occupies residues 1–20 (MTVQKPIESLSPAQAKREHR). NAD(+) contacts are provided by residues 43–47 (DAEYD), 92–93 (SL), and E126. K128 (N6-AMP-lysine intermediate) is an active-site residue. The NAD(+) site is built by R149, E185, K301, and K325. Zn(2+) is bound by residues C419, C422, C443, and C449. The region spanning 621 to 699 (AKESPVAGKT…EEDWLKLVGE (79 aa)) is the BRCT domain.

The protein belongs to the NAD-dependent DNA ligase family. LigA subfamily. Mg(2+) serves as cofactor. The cofactor is Mn(2+).

It catalyses the reaction NAD(+) + (deoxyribonucleotide)n-3'-hydroxyl + 5'-phospho-(deoxyribonucleotide)m = (deoxyribonucleotide)n+m + AMP + beta-nicotinamide D-nucleotide.. DNA ligase that catalyzes the formation of phosphodiester linkages between 5'-phosphoryl and 3'-hydroxyl groups in double-stranded DNA using NAD as a coenzyme and as the energy source for the reaction. It is essential for DNA replication and repair of damaged DNA. The protein is DNA ligase of Beijerinckia indica subsp. indica (strain ATCC 9039 / DSM 1715 / NCIMB 8712).